The sequence spans 66 residues: MMVPVRCFSCGTVVGEHWEAFKARAETHDGDEDPADVLDDLGVDRHCCRRMLIAHQDLVDVVSPYQ.

Zn(2+)-binding residues include Cys-7, Cys-10, Cys-47, and Cys-48.

It belongs to the archaeal Rpo10/eukaryotic RPB10 RNA polymerase subunit family. Part of the RNA polymerase complex. Zn(2+) serves as cofactor.

The protein localises to the cytoplasm. The catalysed reaction is RNA(n) + a ribonucleoside 5'-triphosphate = RNA(n+1) + diphosphate. In terms of biological role, DNA-dependent RNA polymerase (RNAP) catalyzes the transcription of DNA into RNA using the four ribonucleoside triphosphates as substrates. The sequence is that of DNA-directed RNA polymerase subunit Rpo10 from Halobacterium salinarum (strain ATCC 29341 / DSM 671 / R1).